A 237-amino-acid polypeptide reads, in one-letter code: NAD-dependent protein deacetylase (237 aa).

Residues 1 to 237 enclose the Deacetylase sirtuin-type domain; sequence MFTTSLRQAQ…LVETNRALQK (237 aa). Residues A18, T22, F29, R30, Q95, D98, and H113 each contribute to the NAD(+) site. F29 lines the nicotinamide pocket. D98 provides a ligand contact to nicotinamide. Residue H113 is the Proton acceptor of the active site. Zn(2+) contacts are provided by C121, C124, C140, and C142. 4 residues coordinate NAD(+): S180, S181, N205, and I224.

This sequence belongs to the sirtuin family. Class U subfamily. Requires Zn(2+) as cofactor.

Its subcellular location is the cytoplasm. The enzyme catalyses N(6)-acetyl-L-lysyl-[protein] + NAD(+) + H2O = 2''-O-acetyl-ADP-D-ribose + nicotinamide + L-lysyl-[protein]. Its function is as follows. NAD-dependent protein deacetylase which modulates the activities of several enzymes which are inactive in their acetylated form. The sequence is that of NAD-dependent protein deacetylase from Shouchella clausii (strain KSM-K16) (Alkalihalobacillus clausii).